Reading from the N-terminus, the 201-residue chain is Mediator of RNA polymerase II transcription subunit 22 (201 aa).

Residues 93–123 (SVNESINQRNQQLRTLREECDKKLIALRDDI) adopt a coiled-coil conformation. The disordered stretch occupies residues 182 to 201 (SQIHTPPHLNGHGAGMTEHT).

It belongs to the Mediator complex subunit 22 family. In terms of assembly, component of the Mediator complex.

Its subcellular location is the nucleus. Its function is as follows. Component of the Mediator complex, a coactivator involved in the regulated transcription of nearly all RNA polymerase II-dependent genes. Mediator functions as a bridge to convey information from gene-specific regulatory proteins to the basal RNA polymerase II transcription machinery. Mediator is recruited to promoters by direct interactions with regulatory proteins and serves as a scaffold for the assembly of a functional preinitiation complex with RNA polymerase II and the general transcription factors. The protein is Mediator of RNA polymerase II transcription subunit 22 (med22) of Xenopus laevis (African clawed frog).